Consider the following 229-residue polypeptide: ATP synthase subunit a (229 aa).

The next 6 membrane-spanning stretches (helical) occupy residues 25-45 (ADAI…SMLA), 82-102 (FFPL…IGLV), 104-124 (GFFP…IVFV), 142-162 (FLGP…IGHF), 181-201 (LVLM…MMLM), and 202-222 (GVLV…IYIQ).

This sequence belongs to the ATPase A chain family. As to quaternary structure, F-type ATPases have 2 components, CF(1) - the catalytic core - and CF(0) - the membrane proton channel. CF(1) has five subunits: alpha(3), beta(3), gamma(1), delta(1), epsilon(1). CF(0) has three main subunits: a(1), b(2) and c(9-12). The alpha and beta chains form an alternating ring which encloses part of the gamma chain. CF(1) is attached to CF(0) by a central stalk formed by the gamma and epsilon chains, while a peripheral stalk is formed by the delta and b chains.

Its subcellular location is the cell inner membrane. In terms of biological role, key component of the proton channel; it plays a direct role in the translocation of protons across the membrane. This is ATP synthase subunit a from Geotalea uraniireducens (strain Rf4) (Geobacter uraniireducens).